A 161-amino-acid polypeptide reads, in one-letter code: 2-C-methyl-D-erythritol 2,4-cyclodiphosphate synthase (161 aa).

A divalent metal cation is bound by residues D13 and H15. 4-CDP-2-C-methyl-D-erythritol 2-phosphate is bound by residues 13 to 15 (DAH) and 40 to 41 (HS). H48 is a binding site for a divalent metal cation. 62–64 (DIG) contacts 4-CDP-2-C-methyl-D-erythritol 2-phosphate.

It belongs to the IspF family. In terms of assembly, homotrimer. It depends on a divalent metal cation as a cofactor.

It catalyses the reaction 4-CDP-2-C-methyl-D-erythritol 2-phosphate = 2-C-methyl-D-erythritol 2,4-cyclic diphosphate + CMP. Its pathway is isoprenoid biosynthesis; isopentenyl diphosphate biosynthesis via DXP pathway; isopentenyl diphosphate from 1-deoxy-D-xylulose 5-phosphate: step 4/6. Involved in the biosynthesis of isopentenyl diphosphate (IPP) and dimethylallyl diphosphate (DMAPP), two major building blocks of isoprenoid compounds. Catalyzes the conversion of 4-diphosphocytidyl-2-C-methyl-D-erythritol 2-phosphate (CDP-ME2P) to 2-C-methyl-D-erythritol 2,4-cyclodiphosphate (ME-CPP) with a corresponding release of cytidine 5-monophosphate (CMP). The protein is 2-C-methyl-D-erythritol 2,4-cyclodiphosphate synthase of Deinococcus radiodurans (strain ATCC 13939 / DSM 20539 / JCM 16871 / CCUG 27074 / LMG 4051 / NBRC 15346 / NCIMB 9279 / VKM B-1422 / R1).